The chain runs to 912 residues: Brevican core protein (912 aa).

The N-terminal stretch at 1–22 (MAPLFLPLLATLVLAWIPVALA) is a signal peptide. The region spanning 36-155 (RVRIAGDAPL…SSDAVEVKVK (120 aa)) is the Ig-like V-type domain. Disulfide bonds link C57-C137, C179-C250, C203-C224, C277-C352, and C301-C322. N130 carries N-linked (GlcNAc...) asparagine glycosylation. Link domains lie at 157–252 (VVFL…YCYA) and 257–354 (GELF…YCFR). The N-linked (GlcNAc...) asparagine glycan is linked to N337. Disordered regions lie at residues 408–427 (IPII…PAEA) and 438–651 (SIVP…SGDC). S418 is subject to Phosphoserine. S418 carries an O-linked (Xyl...) (chondroitin sulfate) serine glycan. Basic and acidic residues predominate over residues 448 to 463 (EEGKVLEQEEKYRGEE). A compositionally biased stretch (acidic residues) spans 464-478 (EKEEEEEEEEVEDEA). The span at 520–537 (VSPPPYDEPEAPRPPRVL) shows a compositional bias: pro residues. Residues 603-617 (GDTRDLETPSEENSR) are compositionally biased toward basic and acidic residues. Residues 647-683 (SSGDCVPSPCHNGGTCLEEEEGVRCLCLPGYGGDLCD) form the EGF-like domain. 8 disulfide bridges follow: C651/C662, C656/C671, C673/C682, C689/C700, C717/C809, C785/C801, C816/C859, and C845/C872. Residues 683–811 (DVGLHFCSPG…NYHLSYTCKM (129 aa)) form the C-type lectin domain. Residues 814 to 874 (VSCGPPPELP…WGLPQISCVP (61 aa)) enclose the Sushi domain.

This sequence belongs to the aggrecan/versican proteoglycan family. In terms of assembly, interacts with TNR. Post-translationally, O-glycosylated; contains chondroitin sulfate. In terms of tissue distribution, brain; expressed in cerebellar astrocytes but not in neurons.

Its subcellular location is the secreted. It localises to the extracellular space. The protein resides in the extracellular matrix. In terms of biological role, may play a role in the terminally differentiating and the adult nervous system during postnatal development. Could stabilize interactions between hyaluronan (HA) and brain proteoglycans. This chain is Brevican core protein (BCAN), found in Bos taurus (Bovine).